Here is a 412-residue protein sequence, read N- to C-terminus: Inositol polyphosphate-5-phosphatase A (412 aa).

Cysteine 409 is lipidated: S-farnesyl cysteine. Residues valine 410–glutamine 412 constitute a propeptide, removed in mature form.

This sequence belongs to the inositol 1,4,5-trisphosphate 5-phosphatase type I family. In terms of assembly, interacts with TASOR. In terms of processing, isoprenylation at Cys-409 is required for localization at the membrane. In terms of tissue distribution, expressed at high levels in cerebellar Purkinje cells (at protein level). Expressed in Sertoli cells of the testis.

It localises to the cell membrane. The protein resides in the cell projection. The protein localises to the dendrite. It catalyses the reaction 1D-myo-inositol 1,4,5-trisphosphate + H2O = 1D-myo-inositol 1,4-bisphosphate + phosphate. The catalysed reaction is 1D-myo-inositol 1,3,4,5-tetrakisphosphate + H2O = 1D-myo-inositol 1,3,4-trisphosphate + phosphate. Phosphatase that specifically hydrolyzes the 5-phosphate of inositol 1,4,5-trisphosphate to inositol 1,4-bisphosphate, and inositol 1,3,4,5-tetrasphosphate to inositol 1,3,4-trisphosphate. Plays a crucial role in the survival of cerebellar Purkinje cells. The protein is Inositol polyphosphate-5-phosphatase A (Inpp5a) of Mus musculus (Mouse).